The primary structure comprises 244 residues: Small ribosomal subunit protein uS3 (244 aa).

Positions 39–107 constitute a KH type-2 domain; the sequence is VREMLRKKLA…PAHINVTEVR (69 aa). The interval 213–244 is disordered; that stretch reads VGQEKQDDSPRNDRNDRGDRGDRPSRPAREAR. Residues 216-244 are compositionally biased toward basic and acidic residues; sequence EKQDDSPRNDRNDRGDRGDRPSRPAREAR.

The protein belongs to the universal ribosomal protein uS3 family. In terms of assembly, part of the 30S ribosomal subunit. Forms a tight complex with proteins S10 and S14.

Its function is as follows. Binds the lower part of the 30S subunit head. Binds mRNA in the 70S ribosome, positioning it for translation. The sequence is that of Small ribosomal subunit protein uS3 from Xanthomonas campestris pv. campestris (strain 8004).